The primary structure comprises 370 residues: 3-dehydroquinate synthase (370 aa).

NAD(+) contacts are provided by residues 108–112, 132–133, K145, and K154; these read GVIGD and TT. The Zn(2+) site is built by E187, H249, and H267.

Belongs to the sugar phosphate cyclases superfamily. Dehydroquinate synthase family. Co(2+) serves as cofactor. Requires Zn(2+) as cofactor. It depends on NAD(+) as a cofactor.

Its subcellular location is the cytoplasm. The enzyme catalyses 7-phospho-2-dehydro-3-deoxy-D-arabino-heptonate = 3-dehydroquinate + phosphate. The protein operates within metabolic intermediate biosynthesis; chorismate biosynthesis; chorismate from D-erythrose 4-phosphate and phosphoenolpyruvate: step 2/7. In terms of biological role, catalyzes the conversion of 3-deoxy-D-arabino-heptulosonate 7-phosphate (DAHP) to dehydroquinate (DHQ). The chain is 3-dehydroquinate synthase from Cereibacter sphaeroides (strain ATCC 17023 / DSM 158 / JCM 6121 / CCUG 31486 / LMG 2827 / NBRC 12203 / NCIMB 8253 / ATH 2.4.1.) (Rhodobacter sphaeroides).